A 566-amino-acid polypeptide reads, in one-letter code: Mitochondrial distribution and morphology protein 34 (566 aa).

The SMP-LTD domain occupies 1–195 (MAFNFNWSPL…LPAIIHRLSL (195 aa)). 4 disordered regions span residues 212–237 (PEQTAGEGPGQDPLASPPQDPVDSLG), 349–401 (GYGL…NPSV), 432–518 (PERR…SSST), and 539–566 (KLMPTSSCGGAFWGRPDHEEYPPPAYGQ). Basic residues predominate over residues 358 to 370 (RHSKAHSRKRKKR). The span at 380–401 (TSDTASVSDESAYTETASNPSV) shows a compositional bias: polar residues. Residues 444 to 454 (PRRDIATEMLR) show a composition bias toward basic and acidic residues.

The protein belongs to the MDM34 family. In terms of assembly, component of the ER-mitochondria encounter structure (ERMES) or MDM complex, composed of mmm1, mdm10, mdm12 and mdm34.

The protein localises to the mitochondrion outer membrane. Its function is as follows. Component of the ERMES/MDM complex, which serves as a molecular tether to connect the endoplasmic reticulum (ER) and mitochondria. Components of this complex are involved in the control of mitochondrial shape and protein biogenesis, and function in nonvesicular lipid trafficking between the ER and mitochondria. Mdm34 is required for the interaction of the ER-resident membrane protein mmm1 and the outer mitochondrial membrane-resident beta-barrel protein mdm10. The sequence is that of Mitochondrial distribution and morphology protein 34 from Aspergillus flavus (strain ATCC 200026 / FGSC A1120 / IAM 13836 / NRRL 3357 / JCM 12722 / SRRC 167).